A 27-amino-acid polypeptide reads, in one-letter code: Chitinase 47 kDa (27 aa).

The 25-residue stretch at 3–27 folds into the GH18 domain; that stretch reads SKVVGYFTEWGTYDRKYYVKNIEXS.

The protein belongs to the glycosyl hydrolase 18 family. Chitinase class II subfamily. In terms of assembly, homodimer.

It carries out the reaction Random endo-hydrolysis of N-acetyl-beta-D-glucosaminide (1-&gt;4)-beta-linkages in chitin and chitodextrins.. Able to cleave chitin oligomers from N=3 to 6. This Streptomyces olivaceoviridis (Streptomyces corchorusii) protein is Chitinase 47 kDa.